The sequence spans 374 residues: Methylthioribose-1-phosphate isomerase (374 aa).

An N-acetylserine modification is found at Ser2. Asp253 serves as the catalytic Proton donor.

This sequence belongs to the eIF-2B alpha/beta/delta subunits family. MtnA subfamily.

It is found in the cytoplasm. Its subcellular location is the nucleus. It catalyses the reaction 5-(methylsulfanyl)-alpha-D-ribose 1-phosphate = 5-(methylsulfanyl)-D-ribulose 1-phosphate. It functions in the pathway amino-acid biosynthesis; L-methionine biosynthesis via salvage pathway; L-methionine from S-methyl-5-thio-alpha-D-ribose 1-phosphate: step 1/6. Catalyzes the interconversion of methylthioribose-1-phosphate (MTR-1-P) into methylthioribulose-1-phosphate (MTRu-1-P). The polypeptide is Methylthioribose-1-phosphate isomerase (Arabidopsis thaliana (Mouse-ear cress)).